Reading from the N-terminus, the 205-residue chain is Fe/S biogenesis protein NfuA (205 aa).

Residues C162 and C165 each coordinate [4Fe-4S] cluster.

Belongs to the NfuA family. As to quaternary structure, homodimer. It depends on [4Fe-4S] cluster as a cofactor.

Involved in iron-sulfur cluster biogenesis. Binds a 4Fe-4S cluster, can transfer this cluster to apoproteins, and thereby intervenes in the maturation of Fe/S proteins. Could also act as a scaffold/chaperone for damaged Fe/S proteins. The chain is Fe/S biogenesis protein NfuA from Blochmanniella floridana.